The primary structure comprises 197 residues: Adenylyl-sulfate kinase (197 aa).

Position 31-38 (31-38) interacts with ATP; it reads GLSGAGKS. S105 serves as the catalytic Phosphoserine intermediate.

This sequence belongs to the APS kinase family.

It carries out the reaction adenosine 5'-phosphosulfate + ATP = 3'-phosphoadenylyl sulfate + ADP + H(+). It functions in the pathway sulfur metabolism; hydrogen sulfide biosynthesis; sulfite from sulfate: step 2/3. Catalyzes the synthesis of activated sulfate. In Aeromonas hydrophila subsp. hydrophila (strain ATCC 7966 / DSM 30187 / BCRC 13018 / CCUG 14551 / JCM 1027 / KCTC 2358 / NCIMB 9240 / NCTC 8049), this protein is Adenylyl-sulfate kinase.